A 415-amino-acid chain; its full sequence is Adipocyte plasma membrane-associated protein (415 aa).

Positions 1-30 are disordered; the sequence is MNEAEGLRQRRPLRPQVITEDSPAQEAKEG. Residues 1–39 are Cytoplasmic-facing; the sequence is MNEAEGLRQRRPLRPQVITEDSPAQEAKEGSAYSSKVFR. Residues 40 to 60 form a helical membrane-spanning segment; sequence VTFLTLAASLAVPLLGATVLL. Over 61-412 the chain is Extracellular; it reads DCPIDPQPIS…RSPFICRLNL (352 aa). Asn159 is a glycosylation site (N-linked (GlcNAc...) asparagine).

The protein belongs to the strictosidine synthase family.

It is found in the membrane. The protein is Adipocyte plasma membrane-associated protein (APMAP) of Gallus gallus (Chicken).